The following is a 533-amino-acid chain: DNA primase large subunit (533 aa).

Residues cysteine 298, cysteine 377, cysteine 393, and cysteine 433 each coordinate [4Fe-4S] cluster. The interval 466 to 492 (RQKRANGSAPPKARIRPDIKGHGDRSM) is disordered. A compositionally biased stretch (basic and acidic residues) spans 480–490 (IRPDIKGHGDR).

It belongs to the eukaryotic-type primase large subunit family. In terms of assembly, heterodimer of a catalytic subunit Prim1 and a regulatory subunit Prim2, also known as the DNA primase complex. Component of the alpha DNA polymerase complex (also known as the alpha DNA polymerase-primase complex) consisting of four subunits: the catalytic subunit PolA1, the regulatory subunit PolA2, and the primase complex subunits Prim1 and Prim2 respectively. PolA1 associates with the DNA primase complex before association with PolA2. Requires [4Fe-4S] cluster as cofactor. As to expression, expressed in embryos (at protein level).

Functionally, regulatory subunit of the DNA primase complex and component of the DNA polymerase alpha complex (also known as the alpha DNA polymerase-primase complex) which play an essential role in the initiation of DNA synthesis. During the S phase of the cell cycle, the DNA polymerase alpha complex (composed of a catalytic subunit PolA1, an accessory subunit PolA2 and two primase subunits, the catalytic subunit Prim1 and the regulatory subunit Prim2) is recruited to DNA at the replicative forks. The primase subunit of the polymerase alpha complex initiates DNA synthesis by oligomerising short RNA primers on both leading and lagging strands. These primers are initially extended by the polymerase alpha catalytic subunit and subsequently transferred to polymerase delta and polymerase epsilon for processive synthesis on the lagging and leading strand, respectively. In the primase complex, both subunits are necessary for the initial di-nucleotide formation, but the extension of the primer depends only on the catalytic subunit. Stabilizes and modulates the activity of the catalytic subunit. The sequence is that of DNA primase large subunit from Drosophila melanogaster (Fruit fly).